A 298-amino-acid polypeptide reads, in one-letter code: Glutamyl-Q tRNA(Asp) synthetase (298 aa).

L-glutamate contacts are provided by residues 8 to 12 (RFAPS) and E44. Residues 11–21 (PSPTGPLHFGS) carry the 'HIGH' region motif. Residues C100, C102, Y123, and C127 each coordinate Zn(2+). Positions 183 and 201 each coordinate L-glutamate. A 'KMSKS' region motif is present at residues 239–243 (KLSKQ). Residue K242 participates in ATP binding.

The protein belongs to the class-I aminoacyl-tRNA synthetase family. GluQ subfamily. Zn(2+) is required as a cofactor.

Its function is as follows. Catalyzes the tRNA-independent activation of glutamate in presence of ATP and the subsequent transfer of glutamate onto a tRNA(Asp). Glutamate is transferred on the 2-amino-5-(4,5-dihydroxy-2-cyclopenten-1-yl) moiety of the queuosine in the wobble position of the QUC anticodon. The polypeptide is Glutamyl-Q tRNA(Asp) synthetase (Burkholderia orbicola (strain AU 1054)).